Consider the following 242-residue polypeptide: Biosynthetic peptidoglycan transglycosylase (242 aa).

The helical transmembrane segment at 19-39 threads the bilayer; sequence ILVVLAVFWGGGIALFSVVPV.

Belongs to the glycosyltransferase 51 family.

Its subcellular location is the cell inner membrane. It carries out the reaction [GlcNAc-(1-&gt;4)-Mur2Ac(oyl-L-Ala-gamma-D-Glu-L-Lys-D-Ala-D-Ala)](n)-di-trans,octa-cis-undecaprenyl diphosphate + beta-D-GlcNAc-(1-&gt;4)-Mur2Ac(oyl-L-Ala-gamma-D-Glu-L-Lys-D-Ala-D-Ala)-di-trans,octa-cis-undecaprenyl diphosphate = [GlcNAc-(1-&gt;4)-Mur2Ac(oyl-L-Ala-gamma-D-Glu-L-Lys-D-Ala-D-Ala)](n+1)-di-trans,octa-cis-undecaprenyl diphosphate + di-trans,octa-cis-undecaprenyl diphosphate + H(+). It functions in the pathway cell wall biogenesis; peptidoglycan biosynthesis. Functionally, peptidoglycan polymerase that catalyzes glycan chain elongation from lipid-linked precursors. This chain is Biosynthetic peptidoglycan transglycosylase, found in Citrobacter koseri (strain ATCC BAA-895 / CDC 4225-83 / SGSC4696).